The primary structure comprises 216 residues: Cytochrome c oxidase subunit 2 (216 aa).

At 1 to 8 (LGLQNATS) the chain is on the mitochondrial intermembrane side. A helical membrane pass occupies residues 9–39 (PIMEELIAFHDHALMIIFLISSLVLYIISLM). Over 40–53 (LTTKLTHTSTMNAQ) the chain is Mitochondrial matrix. A helical membrane pass occupies residues 54 to 81 (EIEMIWTILPAVILIMIALPSLRILYMT). The Mitochondrial intermembrane segment spans residues 82–216 (DEFNKPYLTL…FIYFQDFEVW (135 aa)). H155, C190, E192, C194, H198, and M201 together coordinate Cu cation. Residue E192 coordinates Mg(2+).

The protein belongs to the cytochrome c oxidase subunit 2 family. As to quaternary structure, component of the cytochrome c oxidase (complex IV, CIV), a multisubunit enzyme composed of 14 subunits. The complex is composed of a catalytic core of 3 subunits MT-CO1, MT-CO2 and MT-CO3, encoded in the mitochondrial DNA, and 11 supernumerary subunits COX4I, COX5A, COX5B, COX6A, COX6B, COX6C, COX7A, COX7B, COX7C, COX8 and NDUFA4, which are encoded in the nuclear genome. The complex exists as a monomer or a dimer and forms supercomplexes (SCs) in the inner mitochondrial membrane with NADH-ubiquinone oxidoreductase (complex I, CI) and ubiquinol-cytochrome c oxidoreductase (cytochrome b-c1 complex, complex III, CIII), resulting in different assemblies (supercomplex SCI(1)III(2)IV(1) and megacomplex MCI(2)III(2)IV(2)). Found in a complex with TMEM177, COA6, COX18, COX20, SCO1 and SCO2. Interacts with TMEM177 in a COX20-dependent manner. Interacts with COX20. Interacts with COX16. Requires Cu cation as cofactor.

Its subcellular location is the mitochondrion inner membrane. It carries out the reaction 4 Fe(II)-[cytochrome c] + O2 + 8 H(+)(in) = 4 Fe(III)-[cytochrome c] + 2 H2O + 4 H(+)(out). In terms of biological role, component of the cytochrome c oxidase, the last enzyme in the mitochondrial electron transport chain which drives oxidative phosphorylation. The respiratory chain contains 3 multisubunit complexes succinate dehydrogenase (complex II, CII), ubiquinol-cytochrome c oxidoreductase (cytochrome b-c1 complex, complex III, CIII) and cytochrome c oxidase (complex IV, CIV), that cooperate to transfer electrons derived from NADH and succinate to molecular oxygen, creating an electrochemical gradient over the inner membrane that drives transmembrane transport and the ATP synthase. Cytochrome c oxidase is the component of the respiratory chain that catalyzes the reduction of oxygen to water. Electrons originating from reduced cytochrome c in the intermembrane space (IMS) are transferred via the dinuclear copper A center (CU(A)) of subunit 2 and heme A of subunit 1 to the active site in subunit 1, a binuclear center (BNC) formed by heme A3 and copper B (CU(B)). The BNC reduces molecular oxygen to 2 water molecules using 4 electrons from cytochrome c in the IMS and 4 protons from the mitochondrial matrix. The sequence is that of Cytochrome c oxidase subunit 2 (MT-CO2) from Callimico goeldii (Goeldi's marmoset).